Reading from the N-terminus, the 289-residue chain is Glucosamine-6-phosphate deaminase 1 (289 aa).

Lys64 bears the N6-acetyllysine mark. Residue Asp72 is the Proton acceptor; for enolization step of the active site. Asp141 (for ring-opening step) is an active-site residue. The Proton acceptor; for ring-opening step role is filled by His143. Catalysis depends on Glu148, which acts as the For ring-opening step. Position 161 is a phosphothreonine (Thr161).

Belongs to the glucosamine/galactosamine-6-phosphate isomerase family. In terms of assembly, homohexamer.

It localises to the cytoplasm. It catalyses the reaction alpha-D-glucosamine 6-phosphate + H2O = beta-D-fructose 6-phosphate + NH4(+). It participates in nucleotide-sugar biosynthesis; UDP-N-acetyl-alpha-D-glucosamine biosynthesis; alpha-D-glucosamine 6-phosphate from D-fructose 6-phosphate: step 1/1. Allosterically activated by N-acetylglucosamine-6-phosphate (GlcNAc6P). Its function is as follows. Catalyzes the reversible conversion of alpha-D-glucosamine 6-phosphate (GlcN-6P) into beta-D-fructose 6-phosphate (Fru-6P) and ammonium ion, a regulatory reaction step in de novo uridine diphosphate-N-acetyl-alpha-D-glucosamine (UDP-GlcNAc) biosynthesis via hexosamine pathway. Deamination is coupled to aldo-keto isomerization mediating the metabolic flux from UDP-GlcNAc toward Fru-6P. At high ammonium level can drive amination and isomerization of Fru-6P toward hexosamines and UDP-GlcNAc synthesis. Has a role in fine tuning the metabolic fluctuations of cytosolic UDP-GlcNAc and their effects on hyaluronan synthesis that occur during tissue remodeling. Seems to trigger calcium oscillations in mammalian eggs. These oscillations serve as the essential trigger for egg activation and early development of the embryo. The chain is Glucosamine-6-phosphate deaminase 1 from Bos taurus (Bovine).